Consider the following 65-residue polypeptide: Large ribosomal subunit protein bL35 (65 aa).

Belongs to the bacterial ribosomal protein bL35 family.

In Clostridium botulinum (strain Loch Maree / Type A3), this protein is Large ribosomal subunit protein bL35.